The primary structure comprises 515 residues: MMSYPLYKLFLKGKLCDVEIVAEGKSIRAHRLVLSAYSKYFYNLFNGNFLEKNVDVIDLEADYKTVFDVIYYMYTESIELHKGNTESIFSLVHYLQIKPLIKKCIYEFNSIVNEENCIRLFKFAELYDLSELKRRARWLMPSLVMNEKDRLREMSLDDLSLMLVQIRNTVDRSIALSAITEWIQTNVRERRRHAVHLATCLGDVPGTASSRAVYKHYMSELRIRVTEFQPAYHNCVVYLGGSMKGRVTALDPETGKSVVLSTWWPEERWECFTAVCMNDVLYFAGGKLDAVPTRQVLSYDVKANTWSRQPNLSEFRSDAAAYAIGGCIYIIGGYDANDRPTNTTLYWRPGYDRWYRGPTLVEAVAETSAVCYKNEIWVLGGRIHRDGVPDVTDVVQKLSGGTWTKVNELSVPKASVTAIVYKERLYCVGGLVDRYAPTNEVIRYRDDTNEWEYVGSTKIERGGAVGCVYNDELYVFGGTDTFTSERYNGVIWKRANDVSCHFATMNAAYATYLEL.

One can recognise a BTB domain in the interval Cys16–Lys82. Kelch repeat units follow at residues Val280–Gly326, Ile328–Asn374, Ile376–Glu423, Arg424–Asp471, and Leu473–Tyr512.

This sequence belongs to the poxviruses Kelch family.

In Oryctolagus cuniculus (Rabbit), this protein is Kelch repeat protein M-T8.